The chain runs to 155 residues: Small ribosomal subunit protein uS7cz/uS7cy (155 aa).

Belongs to the universal ribosomal protein uS7 family. In terms of assembly, part of the 30S ribosomal subunit.

Its subcellular location is the plastid. One of the primary rRNA binding proteins, it binds directly to 16S rRNA where it nucleates assembly of the head domain of the 30S subunit. This is Small ribosomal subunit protein uS7cz/uS7cy (rps7-A) from Cuscuta obtusiflora (Peruvian dodder).